The chain runs to 331 residues: Barley B recombinant-like protein D (331 aa).

A coiled-coil region spans residues 43-101 (ALMNDRDNAIRERDHALAEKKAAIAERDMAFTQRDAAMAERNAAVVERDNALAALELAR). Residues 51–86 (AIRERDHALAEKKAAIAERDMAFTQRDAAMAERNAA) form an alanine-zipper region. A compositionally biased stretch (polar residues) spans 104-122 (GLNMNNGNGFPQGSLSGSK). 2 disordered regions span residues 104 to 140 (GLNM…PLQL) and 156 to 205 (AYPI…VGMS).

The protein belongs to the BBR/BPC family. In terms of assembly, homodimer. Heterodimer.

The protein resides in the nucleus. Functionally, transcriptional regulator that specifically binds to GA-rich elements (GAGA-repeats) present in regulatory sequences of genes involved in developmental processes. The sequence is that of Barley B recombinant-like protein D from Oryza sativa subsp. japonica (Rice).